The sequence spans 355 residues: Myosin-binding protein H-like (355 aa).

Polar residues-rich tracts occupy residues 1–16 (METATTLEIASCSQRQ) and 31–41 (TSHQQEAGSPS). The interval 1–41 (METATTLEIASCSQRQVEAAADPADAKGPRTSHQQEAGSPS) is disordered. S39 is subject to Phosphoserine. One can recognise an Ig-like C2-type 1 domain in the interval 46 to 140 (PSIEEHPKIW…GGLQATATIN (95 aa)). Residues 149–244 (PPQSIKLVDV…TADLAHIQKA (96 aa)) form the Fibronectin type-III domain. One can recognise an Ig-like C2-type 2 domain in the interval 262-346 (PKFTQPLADC…INALGEASVD (85 aa)). The cysteines at positions 283 and 334 are disulfide-linked. R322 is subject to Omega-N-methylarginine.

It belongs to the immunoglobulin superfamily. MyBP family. As to expression, expressed in the atria as well as in discrete puncta throughout the right ventricular wall and septum.

It is found in the cytoplasm. Its subcellular location is the myofibril. It localises to the sarcomere. Functionally, myosin-binding protein which plays a role in cardiac function. Seems to regulate conduction in the atria and ventricular conduction systems. The chain is Myosin-binding protein H-like from Mus musculus (Mouse).